The primary structure comprises 236 residues: 1-(5-phosphoribosyl)-5-[(5-phosphoribosylamino)methylideneamino] imidazole-4-carboxamide isomerase (236 aa).

The active-site Proton acceptor is Asp-8. Asp-127 (proton donor) is an active-site residue.

This sequence belongs to the HisA/HisF family.

It is found in the cytoplasm. It catalyses the reaction 1-(5-phospho-beta-D-ribosyl)-5-[(5-phospho-beta-D-ribosylamino)methylideneamino]imidazole-4-carboxamide = 5-[(5-phospho-1-deoxy-D-ribulos-1-ylimino)methylamino]-1-(5-phospho-beta-D-ribosyl)imidazole-4-carboxamide. Its pathway is amino-acid biosynthesis; L-histidine biosynthesis; L-histidine from 5-phospho-alpha-D-ribose 1-diphosphate: step 4/9. The polypeptide is 1-(5-phosphoribosyl)-5-[(5-phosphoribosylamino)methylideneamino] imidazole-4-carboxamide isomerase (Campylobacter hominis (strain ATCC BAA-381 / DSM 21671 / CCUG 45161 / LMG 19568 / NCTC 13146 / CH001A)).